The following is a 95-amino-acid chain: Co-chaperonin GroES (95 aa).

This sequence belongs to the GroES chaperonin family. In terms of assembly, heptamer of 7 subunits arranged in a ring. Interacts with the chaperonin GroEL.

It is found in the cytoplasm. Its function is as follows. Together with the chaperonin GroEL, plays an essential role in assisting protein folding. The GroEL-GroES system forms a nano-cage that allows encapsulation of the non-native substrate proteins and provides a physical environment optimized to promote and accelerate protein folding. GroES binds to the apical surface of the GroEL ring, thereby capping the opening of the GroEL channel. The sequence is that of Co-chaperonin GroES from Desulfotalea psychrophila (strain LSv54 / DSM 12343).